We begin with the raw amino-acid sequence, 266 residues long: Methionine aminopeptidase 1 (266 aa).

H88 contacts substrate. 3 residues coordinate a divalent metal cation: D106, D117, and H186. Position 193 (H193) interacts with substrate. A divalent metal cation is bound by residues E219 and E250.

Belongs to the peptidase M24A family. Methionine aminopeptidase type 1 subfamily. As to quaternary structure, monomer. Co(2+) serves as cofactor. It depends on Zn(2+) as a cofactor. The cofactor is Mn(2+). Fe(2+) is required as a cofactor.

The enzyme catalyses Release of N-terminal amino acids, preferentially methionine, from peptides and arylamides.. Removes the N-terminal methionine from nascent proteins. The N-terminal methionine is often cleaved when the second residue in the primary sequence is small and uncharged (Met-Ala-, Cys, Gly, Pro, Ser, Thr, or Val). Requires deformylation of the N(alpha)-formylated initiator methionine before it can be hydrolyzed. This is Methionine aminopeptidase 1 from Mycobacterium tuberculosis (strain CDC 1551 / Oshkosh).